Reading from the N-terminus, the 573-residue chain is Sulfite reductase [NADPH] hemoprotein beta-component (573 aa).

A disordered region spans residues 1–20 (MAKVELKAPDGPPSDVERIK). Residues Cys-438, Cys-444, Cys-483, and Cys-487 each contribute to the [4Fe-4S] cluster site. Residue Cys-487 coordinates siroheme.

Belongs to the nitrite and sulfite reductase 4Fe-4S domain family. As to quaternary structure, alpha(8)-beta(8). The alpha component is a flavoprotein, the beta component is a hemoprotein. Siroheme serves as cofactor. Requires [4Fe-4S] cluster as cofactor.

It carries out the reaction hydrogen sulfide + 3 NADP(+) + 3 H2O = sulfite + 3 NADPH + 4 H(+). Its pathway is sulfur metabolism; hydrogen sulfide biosynthesis; hydrogen sulfide from sulfite (NADPH route): step 1/1. Component of the sulfite reductase complex that catalyzes the 6-electron reduction of sulfite to sulfide. This is one of several activities required for the biosynthesis of L-cysteine from sulfate. The protein is Sulfite reductase [NADPH] hemoprotein beta-component of Geobacillus kaustophilus (strain HTA426).